Here is a 414-residue protein sequence, read N- to C-terminus: Enterobactin exporter EntS (414 aa).

Over 1–21 (MNRQSWLLNLSLLKTHPAFRA) the chain is Cytoplasmic. Residues 22–42 (VFLARFISIVSLGLLGVAVPV) traverse the membrane as a helical segment. The Periplasmic portion of the chain corresponds to 43-55 (QIQMMTHSTWQVG). Residues 56–76 (LSVTLTGGAMFIGLMVGGVLA) traverse the membrane as a helical segment. Topologically, residues 77–83 (DRYERKK) are cytoplasmic. Residues 84–104 (VILLARGTCGIGFIGLCVNAL) traverse the membrane as a helical segment. Residues 105–109 (LPEPS) are Periplasmic-facing. A helical transmembrane segment spans residues 110-130 (LLAIYLLGLWDGFFASLGVTA). The Cytoplasmic segment spans residues 131 to 156 (LLAATPALVGRENLMQAGAITMLTVR). The chain crosses the membrane as a helical span at residues 157–177 (LGSVISPMLGGILLASGGVAW). N178 is a topological domain (periplasmic). A helical transmembrane segment spans residues 179–199 (YGLAAAGTFITLLPLLTLPRL). The Cytoplasmic portion of the chain corresponds to 200–218 (PVPPQPRENPFIALLAAFR). Residues 219-239 (FLLASPLIGGIALLGGLVTMA) form a helical membrane-spanning segment. Residues 240–256 (SAVRVLYPALAMSWQMS) are Periplasmic-facing. The chain crosses the membrane as a helical span at residues 257–277 (AAQIGLLYAAIPLGAAIGALT). Residues 278-287 (SGQLAHSVRP) lie on the Cytoplasmic side of the membrane. Residues 288–307 (GLIMLVSTVGSFLAVGLFAI) traverse the membrane as a helical segment. The Periplasmic segment spans residues 308–313 (MPIWIA). A helical membrane pass occupies residues 314–336 (GVICLALFGWLSAISSLLQYTLL). The Cytoplasmic segment spans residues 337 to 356 (QTQTPENMLGRMNGLWTAQN). The helical transmembrane segment at 357 to 377 (VTGDAIGAALLGGLGAMMTPV) threads the bilayer. Position 378 (A378) is a topological domain, periplasmic. The chain crosses the membrane as a helical span at residues 379–399 (SASVSGFGLVIIGLLLLLVLG). Topologically, residues 400 to 414 (ELRRFRQTPPVSDAG) are cytoplasmic.

It belongs to the major facilitator superfamily. EntS (TC 2.A.1.38) family.

Its subcellular location is the cell inner membrane. Component of an export pathway for enterobactin. The polypeptide is Enterobactin exporter EntS (Salmonella typhi).